The primary structure comprises 201 residues: Elongation factor Ts (201 aa).

Residues 83-86 (TDFV) form an involved in Mg(2+) ion dislocation from EF-Tu region.

The protein belongs to the EF-Ts family.

It localises to the cytoplasm. Associates with the EF-Tu.GDP complex and induces the exchange of GDP to GTP. It remains bound to the aminoacyl-tRNA.EF-Tu.GTP complex up to the GTP hydrolysis stage on the ribosome. The chain is Elongation factor Ts from Methylacidiphilum infernorum (isolate V4) (Methylokorus infernorum (strain V4)).